A 281-amino-acid chain; its full sequence is Bifunctional protein FolD (281 aa).

NADP(+) contacts are provided by residues 164–166 (GRS), S189, and I230.

It belongs to the tetrahydrofolate dehydrogenase/cyclohydrolase family. As to quaternary structure, homodimer.

The catalysed reaction is (6R)-5,10-methylene-5,6,7,8-tetrahydrofolate + NADP(+) = (6R)-5,10-methenyltetrahydrofolate + NADPH. It catalyses the reaction (6R)-5,10-methenyltetrahydrofolate + H2O = (6R)-10-formyltetrahydrofolate + H(+). The protein operates within one-carbon metabolism; tetrahydrofolate interconversion. In terms of biological role, catalyzes the oxidation of 5,10-methylenetetrahydrofolate to 5,10-methenyltetrahydrofolate and then the hydrolysis of 5,10-methenyltetrahydrofolate to 10-formyltetrahydrofolate. The chain is Bifunctional protein FolD from Pelagibacter ubique (strain HTCC1062).